The chain runs to 89 residues: Small ribosomal subunit protein uS15 (89 aa).

It belongs to the universal ribosomal protein uS15 family. In terms of assembly, part of the 30S ribosomal subunit. Forms a bridge to the 50S subunit in the 70S ribosome, contacting the 23S rRNA.

Its function is as follows. One of the primary rRNA binding proteins, it binds directly to 16S rRNA where it helps nucleate assembly of the platform of the 30S subunit by binding and bridging several RNA helices of the 16S rRNA. In terms of biological role, forms an intersubunit bridge (bridge B4) with the 23S rRNA of the 50S subunit in the ribosome. In Rhizobium leguminosarum bv. trifolii (strain WSM2304), this protein is Small ribosomal subunit protein uS15.